The chain runs to 90 residues: MKNIKPLADRVLIKIKEAESKTISGLYIPENAKEKTNIGTVIAVGSNKEEITVKVGDTVLYEKYAGAAVKIENKEHLILKAKEIVAIIEE.

It belongs to the GroES chaperonin family. As to quaternary structure, heptamer of 7 subunits arranged in a ring. Interacts with the chaperonin GroEL.

The protein localises to the cytoplasm. Together with the chaperonin GroEL, plays an essential role in assisting protein folding. The GroEL-GroES system forms a nano-cage that allows encapsulation of the non-native substrate proteins and provides a physical environment optimized to promote and accelerate protein folding. GroES binds to the apical surface of the GroEL ring, thereby capping the opening of the GroEL channel. The protein is Co-chaperonin GroES of Borreliella burgdorferi (strain ATCC 35210 / DSM 4680 / CIP 102532 / B31) (Borrelia burgdorferi).